The following is a 204-amino-acid chain: Nucleoside triphosphate pyrophosphatase (204 aa).

The Proton acceptor role is filled by aspartate 78.

This sequence belongs to the Maf family. Requires a divalent metal cation as cofactor.

It localises to the cytoplasm. The catalysed reaction is a ribonucleoside 5'-triphosphate + H2O = a ribonucleoside 5'-phosphate + diphosphate + H(+). It carries out the reaction a 2'-deoxyribonucleoside 5'-triphosphate + H2O = a 2'-deoxyribonucleoside 5'-phosphate + diphosphate + H(+). In terms of biological role, nucleoside triphosphate pyrophosphatase. May have a dual role in cell division arrest and in preventing the incorporation of modified nucleotides into cellular nucleic acids. This is Nucleoside triphosphate pyrophosphatase from Prochlorococcus marinus (strain MIT 9215).